The primary structure comprises 591 residues: Splicing factor U2af large subunit A (591 aa).

Residues 1-215 are disordered; sequence MAEHDAPPES…QSKRMSGFDQ (215 aa). Residues 27 to 36 show a composition bias toward polar residues; sequence SPQQDAQPLS. Composition is skewed to basic and acidic residues over residues 37 to 79 and 157 to 191; these read SRDR…SRDR and RERS…DRDG. 2 RRM domains span residues 272–355 and 392–470; these read RRVY…RPTD and DRIF…RANQ.

The protein belongs to the splicing factor SR family.

The protein localises to the nucleus. Functionally, necessary for the splicing of pre-mRNA. This Triticum aestivum (Wheat) protein is Splicing factor U2af large subunit A (U2AF65A).